Here is a 469-residue protein sequence, read N- to C-terminus: Neuraminidase (469 aa).

Topologically, residues 1–6 (MNPNQK) are intravirion. The helical transmembrane segment at 7-29 (IITIGSVSLTIATACSLMQIAIL) threads the bilayer. The tract at residues 11–33 (GSVSLTIATACSLMQIAILATTV) is involved in apical transport and lipid raft association. Over 30–469 (ATTVTLHFKQ…DGANINFMPI (440 aa)) the chain is Virion surface. The segment at 36–88 (HFKQHECDSPASNQVMPCEPIIIERNITEIVYLNNTTIEKEICPEVVEYRNWS) is hypervariable stalk region. 4 N-linked (GlcNAc...) asparagine; by host glycosylation sites follow: Asn61, Asn69, Asn70, and Asn86. The interval 91–469 (QCQITGFAPF…DGANINFMPI (379 aa)) is head of neuraminidase. Intrachain disulfides connect Cys92–Cys417, Cys124–Cys129, Cys183–Cys230, Cys232–Cys237, Cys278–Cys291, Cys280–Cys289, Cys318–Cys337, and Cys421–Cys447. A substrate-binding site is contributed by Arg118. Residue Asn146 is glycosylated (N-linked (GlcNAc...) asparagine; by host). Asp151 (proton donor/acceptor) is an active-site residue. Residue Arg152 participates in substrate binding. Residues Asn200 and Asn234 are each glycosylated (N-linked (GlcNAc...) asparagine; by host). Residue 276 to 277 (EE) participates in substrate binding. Substrate is bound at residue Arg292. Ca(2+) contacts are provided by Asp293, Gly297, and Asp324. The interval 325 to 349 (TPRNDDSSSNSNCRDPNNERGNPGV) is disordered. Arg371 is a binding site for substrate. Residue Asn402 is glycosylated (N-linked (GlcNAc...) asparagine; by host). Tyr406 functions as the Nucleophile in the catalytic mechanism.

Belongs to the glycosyl hydrolase 34 family. In terms of assembly, homotetramer. It depends on Ca(2+) as a cofactor. Post-translationally, N-glycosylated.

It localises to the virion membrane. Its subcellular location is the host apical cell membrane. It catalyses the reaction Hydrolysis of alpha-(2-&gt;3)-, alpha-(2-&gt;6)-, alpha-(2-&gt;8)- glycosidic linkages of terminal sialic acid residues in oligosaccharides, glycoproteins, glycolipids, colominic acid and synthetic substrates.. Inhibited by the neuraminidase inhibitors zanamivir (Relenza) and oseltamivir (Tamiflu). These drugs interfere with the release of progeny virus from infected cells and are effective against all influenza strains. Resistance to neuraminidase inhibitors is quite rare. In terms of biological role, catalyzes the removal of terminal sialic acid residues from viral and cellular glycoconjugates. Cleaves off the terminal sialic acids on the glycosylated HA during virus budding to facilitate virus release. Additionally helps virus spread through the circulation by further removing sialic acids from the cell surface. These cleavages prevent self-aggregation and ensure the efficient spread of the progeny virus from cell to cell. Otherwise, infection would be limited to one round of replication. Described as a receptor-destroying enzyme because it cleaves a terminal sialic acid from the cellular receptors. May facilitate viral invasion of the upper airways by cleaving the sialic acid moieties on the mucin of the airway epithelial cells. Likely to plays a role in the budding process through its association with lipid rafts during intracellular transport. May additionally display a raft-association independent effect on budding. Plays a role in the determination of host range restriction on replication and virulence. Sialidase activity in late endosome/lysosome traffic seems to enhance virus replication. The chain is Neuraminidase from Aves (Human).